The primary structure comprises 429 residues: Ribosomal RNA small subunit methyltransferase B (429 aa).

S-adenosyl-L-methionine-binding positions include 254–260 (CAAPGGK), Asp277, Asp303, and Asp322. Cys375 (nucleophile) is an active-site residue. The interval 397 to 419 (ALSETGTPDQPGQQNLPGGEEGD) is disordered. Positions 400–412 (ETGTPDQPGQQNL) are enriched in polar residues.

The protein belongs to the class I-like SAM-binding methyltransferase superfamily. RsmB/NOP family.

The protein resides in the cytoplasm. It carries out the reaction cytidine(967) in 16S rRNA + S-adenosyl-L-methionine = 5-methylcytidine(967) in 16S rRNA + S-adenosyl-L-homocysteine + H(+). In terms of biological role, specifically methylates the cytosine at position 967 (m5C967) of 16S rRNA. This is Ribosomal RNA small subunit methyltransferase B from Salmonella choleraesuis (strain SC-B67).